The sequence spans 359 residues: Dual-specificity RNA methyltransferase RlmN (359 aa).

Residue glutamate 98 is the Proton acceptor of the active site. The region spanning 104-329 (EPKRGTLCIS…LEHGLTATIR (226 aa)) is the Radical SAM core domain. Cysteines 111 and 340 form a disulfide. Residues cysteine 118, cysteine 122, and cysteine 125 each coordinate [4Fe-4S] cluster. Residues 166–167 (GE), serine 198, 220–222 (SLH), and asparagine 297 contribute to the S-adenosyl-L-methionine site. Cysteine 340 serves as the catalytic S-methylcysteine intermediate.

It belongs to the radical SAM superfamily. RlmN family. It depends on [4Fe-4S] cluster as a cofactor.

It localises to the cytoplasm. It catalyses the reaction adenosine(2503) in 23S rRNA + 2 reduced [2Fe-2S]-[ferredoxin] + 2 S-adenosyl-L-methionine = 2-methyladenosine(2503) in 23S rRNA + 5'-deoxyadenosine + L-methionine + 2 oxidized [2Fe-2S]-[ferredoxin] + S-adenosyl-L-homocysteine. The catalysed reaction is adenosine(37) in tRNA + 2 reduced [2Fe-2S]-[ferredoxin] + 2 S-adenosyl-L-methionine = 2-methyladenosine(37) in tRNA + 5'-deoxyadenosine + L-methionine + 2 oxidized [2Fe-2S]-[ferredoxin] + S-adenosyl-L-homocysteine. Specifically methylates position 2 of adenine 2503 in 23S rRNA and position 2 of adenine 37 in tRNAs. m2A2503 modification seems to play a crucial role in the proofreading step occurring at the peptidyl transferase center and thus would serve to optimize ribosomal fidelity. The chain is Dual-specificity RNA methyltransferase RlmN from Halorhodospira halophila (strain DSM 244 / SL1) (Ectothiorhodospira halophila (strain DSM 244 / SL1)).